Consider the following 173-residue polypeptide: Putative MgpC-like protein MPN_092 (173 aa).

It belongs to the MgpC family.

This chain is Putative MgpC-like protein MPN_092, found in Mycoplasma pneumoniae (strain ATCC 29342 / M129 / Subtype 1) (Mycoplasmoides pneumoniae).